The sequence spans 197 residues: Pyridoxal 5'-phosphate synthase subunit PdxT (197 aa).

An L-glutamine-binding site is contributed by 52–54; it reads GES. Cys-83 functions as the Nucleophile in the catalytic mechanism. L-glutamine-binding positions include Arg-115 and 142-143; that span reads IR. Active-site charge relay system residues include His-178 and Glu-180.

It belongs to the glutaminase PdxT/SNO family. In the presence of PdxS, forms a dodecamer of heterodimers. Only shows activity in the heterodimer.

The catalysed reaction is aldehydo-D-ribose 5-phosphate + D-glyceraldehyde 3-phosphate + L-glutamine = pyridoxal 5'-phosphate + L-glutamate + phosphate + 3 H2O + H(+). It catalyses the reaction L-glutamine + H2O = L-glutamate + NH4(+). Its pathway is cofactor biosynthesis; pyridoxal 5'-phosphate biosynthesis. Its function is as follows. Catalyzes the hydrolysis of glutamine to glutamate and ammonia as part of the biosynthesis of pyridoxal 5'-phosphate. The resulting ammonia molecule is channeled to the active site of PdxS. The protein is Pyridoxal 5'-phosphate synthase subunit PdxT of Korarchaeum cryptofilum (strain OPF8).